We begin with the raw amino-acid sequence, 317 residues long: Olfactory receptor-like protein OLF3 (317 aa).

Topologically, residues 1-25 (MGTGNQTWVREFVLLGLSSDWDTEV) are extracellular. Residue N5 is glycosylated (N-linked (GlcNAc...) asparagine). Residues 26 to 49 (SLFVLFLITYMVTVLGNFLIILLI) form a helical membrane-spanning segment. At 50–57 (RLDSRLHT) the chain is on the cytoplasmic side. Residues 58 to 79 (PMYFFLTNLSLVDVSYATSIIP) traverse the membrane as a helical segment. Over 80-100 (QMLAHLLAAHKAIPFVSCAAQ) the chain is Extracellular. A helical transmembrane segment spans residues 101 to 120 (LFFSLGLGGIEFVLLAVMAY). At 121-139 (DRYVAVCDPLRYSVIMHGG) the chain is on the cytoplasmic side. Residues 140-158 (LCTRLAITSWVSGSMNSLM) traverse the membrane as a helical segment. Over 159-196 (QTVITFQLPMCTNKYIDHISCELLAVVRLACVDTSSNE) the chain is Extracellular. A helical membrane pass occupies residues 197 to 219 (IAIMVSSIVLLMTPFCLVLLSYI). Residues 220 to 236 (QIISTILKIQSTEGRKK) are Cytoplasmic-facing. The chain crosses the membrane as a helical span at residues 237 to 260 (AFHTCASHLTVVVLCYGMAIFTYI). The Extracellular portion of the chain corresponds to 261-272 (QPRSSPSVLQEK). A helical transmembrane segment spans residues 273–292 (LISLFYSVLTPMLNPMIYSV). Over 293-317 (RNKEVKGAWQKLLGQLTGITSKLAT) the chain is Cytoplasmic.

Belongs to the G-protein coupled receptor 1 family.

Its subcellular location is the cell membrane. Functionally, putative odorant or sperm cell receptor. This Canis lupus familiaris (Dog) protein is Olfactory receptor-like protein OLF3.